The following is a 431-amino-acid chain: O-methyltransferase gliM (431 aa).

The stretch at 20–85 (EFKAIVNDLR…SMDKLQLQLV (66 aa)) forms a coiled coil. S-adenosyl-L-methionine is bound by residues Asp287 and 319 to 321 (GDF). His338 serves as the catalytic Proton acceptor.

It belongs to the class I-like SAM-binding methyltransferase superfamily. Cation-independent O-methyltransferase family. COMT subfamily.

It functions in the pathway mycotoxin biosynthesis. In terms of biological role, O-methyltransferase; part of the gene cluster that mediates the biosynthesis of gliotoxin, a member of the epipolythiodioxopiperazine (ETP) class of toxins characterized by a disulfide bridged cyclic dipeptide. The first step in gliotoxin biosynthesis is the condensation of serine and phenylalanine to form the cyclo-L-phenylalanyl-L-serine diketopiperazine (DKP) by the NRPS gliP. GliP is also able to produce the DKP cyclo-L-tryptophanyl-L-serine, suggesting that the substrate specificity of the first adenylation (A) domain in gliP is sufficiently relaxed to accommodate both L-Phe and L-Trp. The cytochrome P450 monooxygenase gliC has been shown to catalyze the subsequent hydroxylation of the alpha-carbon of L-Phe in cyclo-L-phenylalanyl-L-serine whereas the second cytochrome P450 enzyme, gliF, is presumably involved in the modification of the DKP side chain. The glutathione S-transferase (GST) gliG then forms a bis-glutathionylated biosynthetic intermediate which is responsible for the sulfurization of gliotoxin. This bis-glutathionylated intermediate is subsequently processed by the gamma-glutamyl cyclotransferase gliK to remove both gamma-glutamyl moieties. Subsequent processing via gliI yields a biosynthetic intermediate, which is N-methylated via the N-methyltransferase gliN, before the gliotoxin oxidoreductase gliT-mediated disulfide bridge closure. GliN-mediated amide methylation confers stability to ETP, damping the spontaneous formation of tri- and tetrasulfides. Intracellular dithiol gliotoxin oxidized by gliT is subsequently effluxed by gliA. Gliotoxin contributes to pathogenesis during invasive aspergillosis. In macrophages and neutrophils, gliotoxin showed inhibition of various different cell functions including cytokine production, antigen presentation, phagocytosis, and production of reactive oxygen species. The protein is O-methyltransferase gliM of Aspergillus fumigatus (strain ATCC MYA-4609 / CBS 101355 / FGSC A1100 / Af293) (Neosartorya fumigata).